The following is a 491-amino-acid chain: Large ribosomal subunit protein mL101 (rPPR4) (491 aa).

PPR repeat units lie at residues 122–156, 157–191, 192–226, 228–262, 263–293, 298–328, 333–367, and 368–402; these read TELTYGSLLNCYCKELLTEKAEGLLNKMKELNITP, SSMSYNSLMTLYTKTGETEKVPAMIQELKAENVMP, DSYTYNVWMRALAATNDISGVERVIEEMNRDGRVA, DWTTYSNMASIYVDAGLSQKAEKALQELEMKNTQR, DFTAYQFLITLYGRLGKLTEVYRIWRSLRLA, SNVAYLNMIQVLVKLNDLPGAETLFKEWQAN, DIRIVNVLIGAYAQEGLIQKANELKEKAPRRGGKL, and NAKTWEIFMDYYVKSGDMARALECMSKAVSIGKGD.

It belongs to the PPR family. P subfamily. Component of the mitochondrial ribosome large subunit.

The protein localises to the mitochondrion. In Arabidopsis thaliana (Mouse-ear cress), this protein is Large ribosomal subunit protein mL101 (rPPR4).